A 203-amino-acid chain; its full sequence is Large ribosomal subunit protein bL25 (203 aa).

Belongs to the bacterial ribosomal protein bL25 family. CTC subfamily. As to quaternary structure, part of the 50S ribosomal subunit; part of the 5S rRNA/L5/L18/L25 subcomplex. Contacts the 5S rRNA. Binds to the 5S rRNA independently of L5 and L18.

This is one of the proteins that binds to the 5S RNA in the ribosome where it forms part of the central protuberance. The protein is Large ribosomal subunit protein bL25 of Rickettsia conorii (strain ATCC VR-613 / Malish 7).